A 329-amino-acid chain; its full sequence is GTP 3',8-cyclase 1 (329 aa).

A Radical SAM core domain is found at 7–230; it reads GQGRQIDYLR…LDSAEQSGGP (224 aa). Arg-16 serves as a coordination point for GTP. [4Fe-4S] cluster-binding residues include Cys-23 and Cys-27. Tyr-29 is an S-adenosyl-L-methionine binding site. Cys-30 is a [4Fe-4S] cluster binding site. Arg-65 is a GTP binding site. Gly-69 is an S-adenosyl-L-methionine binding site. Position 96 (Thr-96) interacts with GTP. Residue Ser-120 coordinates S-adenosyl-L-methionine. Lys-157 contacts GTP. Met-191 lines the S-adenosyl-L-methionine pocket. Residues Cys-255 and Cys-258 each contribute to the [4Fe-4S] cluster site. GTP is bound at residue 260–262; the sequence is RLR. Position 272 (Cys-272) interacts with [4Fe-4S] cluster.

It belongs to the radical SAM superfamily. MoaA family. As to quaternary structure, monomer and homodimer. It depends on [4Fe-4S] cluster as a cofactor.

The enzyme catalyses GTP + AH2 + S-adenosyl-L-methionine = (8S)-3',8-cyclo-7,8-dihydroguanosine 5'-triphosphate + 5'-deoxyadenosine + L-methionine + A + H(+). The protein operates within cofactor biosynthesis; molybdopterin biosynthesis. Functionally, catalyzes the cyclization of GTP to (8S)-3',8-cyclo-7,8-dihydroguanosine 5'-triphosphate. The protein is GTP 3',8-cyclase 1 (moaA1) of Pseudomonas aeruginosa (strain ATCC 15692 / DSM 22644 / CIP 104116 / JCM 14847 / LMG 12228 / 1C / PRS 101 / PAO1).